The sequence spans 239 residues: ATP-dependent dethiobiotin synthetase BioD (239 aa).

15–20 (EIGKTF) provides a ligand contact to ATP. A Mg(2+)-binding site is contributed by Thr-19. Lys-40 is a catalytic residue. Residues Asp-57, 118-121 (EGAG), and 178-179 (NH) each bind ATP. 2 residues coordinate Mg(2+): Asp-57 and Glu-118.

It belongs to the dethiobiotin synthetase family. As to quaternary structure, homodimer. Requires Mg(2+) as cofactor.

It localises to the cytoplasm. The catalysed reaction is (7R,8S)-7,8-diammoniononanoate + CO2 + ATP = (4R,5S)-dethiobiotin + ADP + phosphate + 3 H(+). Its pathway is cofactor biosynthesis; biotin biosynthesis; biotin from 7,8-diaminononanoate: step 1/2. In terms of biological role, catalyzes a mechanistically unusual reaction, the ATP-dependent insertion of CO2 between the N7 and N8 nitrogen atoms of 7,8-diaminopelargonic acid (DAPA, also called 7,8-diammoniononanoate) to form a ureido ring. In Burkholderia lata (strain ATCC 17760 / DSM 23089 / LMG 22485 / NCIMB 9086 / R18194 / 383), this protein is ATP-dependent dethiobiotin synthetase BioD.